The primary structure comprises 279 residues: Dermonecrotic toxin LbSicTox-alphaIB1a (279 aa).

His11 is an active-site residue. Residues Glu31 and Asp33 each coordinate Mg(2+). The active-site Nucleophile is the His47. 2 disulfides stabilise this stretch: Cys51–Cys57 and Cys53–Cys196. Residue Asp91 participates in Mg(2+) binding.

Belongs to the arthropod phospholipase D family. Class II subfamily. Class IIa sub-subfamily. Mg(2+) is required as a cofactor. In terms of tissue distribution, expressed by the venom gland.

It localises to the secreted. It carries out the reaction an N-(acyl)-sphingosylphosphocholine = an N-(acyl)-sphingosyl-1,3-cyclic phosphate + choline. The enzyme catalyses an N-(acyl)-sphingosylphosphoethanolamine = an N-(acyl)-sphingosyl-1,3-cyclic phosphate + ethanolamine. It catalyses the reaction a 1-acyl-sn-glycero-3-phosphocholine = a 1-acyl-sn-glycero-2,3-cyclic phosphate + choline. The catalysed reaction is a 1-acyl-sn-glycero-3-phosphoethanolamine = a 1-acyl-sn-glycero-2,3-cyclic phosphate + ethanolamine. Dermonecrotic toxins cleave the phosphodiester linkage between the phosphate and headgroup of certain phospholipids (sphingolipid and lysolipid substrates), forming an alcohol (often choline) and a cyclic phosphate. This toxin acts on sphingomyelin (SM) with high activity (about 30.5-31.5 U/mg). It may also act on ceramide phosphoethanolamine (CPE), lysophosphatidylcholine (LPC) and lysophosphatidylethanolamine (LPE), but not on lysophosphatidylserine (LPS), and lysophosphatidylglycerol (LPG). It acts by transphosphatidylation, releasing exclusively cyclic phosphate products as second products. Induces dermonecrosis, hemolysis, increased vascular permeability, edema, inflammatory response, and platelet aggregation. Is lethal to mice. The chain is Dermonecrotic toxin LbSicTox-alphaIB1a from Loxosceles boneti (North American fiddleback spider).